Here is a 465-residue protein sequence, read N- to C-terminus: tRNA-2-methylthio-N(6)-dimethylallyladenosine synthase (465 aa).

One can recognise an MTTase N-terminal domain in the interval 5-125; it reads RKLHIKSYGC…LPELLKRAGN (121 aa). Cysteine 14, cysteine 50, cysteine 88, cysteine 166, cysteine 170, and cysteine 173 together coordinate [4Fe-4S] cluster. The Radical SAM core domain occupies 152 to 384; it reads RARGISAFVT…QELIDSQQSA (233 aa). A TRAM domain is found at 387-449; sequence KAAIGSTVDV…RYSFLGELVT (63 aa).

This sequence belongs to the methylthiotransferase family. MiaB subfamily. In terms of assembly, monomer. Requires [4Fe-4S] cluster as cofactor.

It is found in the cytoplasm. It catalyses the reaction N(6)-dimethylallyladenosine(37) in tRNA + (sulfur carrier)-SH + AH2 + 2 S-adenosyl-L-methionine = 2-methylsulfanyl-N(6)-dimethylallyladenosine(37) in tRNA + (sulfur carrier)-H + 5'-deoxyadenosine + L-methionine + A + S-adenosyl-L-homocysteine + 2 H(+). Its function is as follows. Catalyzes the methylthiolation of N6-(dimethylallyl)adenosine (i(6)A), leading to the formation of 2-methylthio-N6-(dimethylallyl)adenosine (ms(2)i(6)A) at position 37 in tRNAs that read codons beginning with uridine. This is tRNA-2-methylthio-N(6)-dimethylallyladenosine synthase from Bradyrhizobium diazoefficiens (strain JCM 10833 / BCRC 13528 / IAM 13628 / NBRC 14792 / USDA 110).